Reading from the N-terminus, the 1333-residue chain is MSYANYRYMKARAKRWRPENLDGIQTSDEHLINLFAKILSKHVPEIGKFDPNKDVESYISKLDQHFTEYPSLFPNEHTKRQYTLNHLEELEQQFAERMFSENGSLTWQELLRQTGKVQGSNKGDRLTKTFEGFRNQLDKVQFIRKLMSKANVDDFHTRLFILWMLPYSLRKLKERNYWKSEISEIYDFLEDKRTASYGKTHKRFQLQNKNLGKESLSKKNNTTNSRNLRKTNVSRIEYSSNKFLNHTRKRYEMVLQAELPDFKCSIPCLIDTGAQANIITEETVRAHKLPTRPWSKSVIYGGVYPNKINRKTIKLNISLNGISIKTEFLVVKKFSHPAAISFTTLYDNNIEISSSKHTLSQMNKVSNIVKEPELPDIYKEFKDITAETNTEKLPKPIKGLEFEVELTQENYRLPIRNYPLPPGKMQAMNDEINQGLKSGIIRESKAINACPVMFVPKKEGTLRMVVDYKPLNKYVKPNIYPLPLIEQLLAKIQGSTIFTKLDLKSAYHLIRVRKGDEHKLAFRCPRGVFEYLVMPYGISTAPAHFQYFINTILGEAKESHVVCYMDDILIHSKSESEHVKHVKDVLQKLKNANLIINQAKCEFHQSQVKFIGYHISEKGFTPCQENIDKVLQWKQPKNRKELRQFLGSVNYLRKFIPKTSQLTHPLNNLLKKDVRWKWTPTQTQAIENIKQCLVSPPVLRHFDFSKKILLETDASDVAVGAVLSQKHDDDKYYPVGYYSAKMSKAQLNYSVSDKEMLAIIKSLKHWRHYLESTIEPFKILTDHRNLIGRITNESEPENKRLARWQLFLQDFNFEINYRPGSANHIADALSRIVDETEPIPKDSEDNSINFVNQISITDDFKNQVVTEYTNDTKLLNLLNNEDKRVEENIQLKDGLLINSKDQILLPNDTQLTRTIIKKYHEEGKLIHPGIELLTNIILRRFTWKGIRKQIQEYVQNCHTCQINKSRNHKPYGPLQPIPPSERPWESLSMDFITALPESSGYNALFVVVDRFSKMAILVPCTKSITAEQTARMFDQRVIAYFGNPKEIIADNDHIFTSQTWKDFAHKYNFVMKFSLPYRPQTDGQTERTNQTVEKLLRCVCSTHPNTWVDHISLVQQSYNNAIHSATQMTPFEIVHRYSPALSPLELPSFSDKTDENSQETIQVFQTVKEHLNTNNIKMKKYFDMKIQEIEEFQPGDLVMVKRTKTGFLHKSNKLAPSFAGPFYVLQKSGPNNYELDLPDSIKHMFSSTFHVSHLEKYRHNSELNYATIDESDIGTILHILEHKNREQVLYLNVKYISNLNPSTIMSGWTTLATALQADKAIVNDYIKNNNLNI.

The disordered stretch occupies residues 209-229; that stretch reads KNLGKESLSKKNNTTNSRNLR. The segment covering 218 to 229 has biased composition (polar residues); the sequence is KKNNTTNSRNLR. A Peptidase A2 domain is found at 266 to 342; sequence IPCLIDTGAQ…KFSHPAAISF (77 aa). Residue aspartate 271 is the For protease activity of the active site. A Reverse transcriptase domain is found at 436 to 615; the sequence is LKSGIIRESK…SQVKFIGYHI (180 aa). Positions 502, 566, 567, 990, and 1050 each coordinate Mg(2+). Residues 979–1138 enclose the Integrase catalytic domain; the sequence is PSERPWESLS…TPFEIVHRYS (160 aa).

Processing of the polyproteins proceeds by an ordered pathway, called maturation. It involves the initial cleavage of a 27 kDa capsid protein (CA) from the N-terminus of the polyprotein, followed by the cleavage of a 56 kDa integrase (IN) from the C-terminus. This leaves a 72 kDa protease-reverse transcriptase fusion protein (PR-RT), which does not seem to be processed further.

This Schizosaccharomyces pombe (strain 972 / ATCC 24843) (Fission yeast) protein is Transposon Tf2-4 polyprotein (Tf2-4).